The chain runs to 491 residues: Cytosol aminopeptidase (491 aa).

Residues Lys263 and Asp268 each contribute to the Mn(2+) site. Lys275 is an active-site residue. Residues Asp286, Asp345, and Glu347 each contribute to the Mn(2+) site. Arg349 is an active-site residue.

Belongs to the peptidase M17 family. Requires Mn(2+) as cofactor.

It is found in the cytoplasm. The catalysed reaction is Release of an N-terminal amino acid, Xaa-|-Yaa-, in which Xaa is preferably Leu, but may be other amino acids including Pro although not Arg or Lys, and Yaa may be Pro. Amino acid amides and methyl esters are also readily hydrolyzed, but rates on arylamides are exceedingly low.. The enzyme catalyses Release of an N-terminal amino acid, preferentially leucine, but not glutamic or aspartic acids.. Its function is as follows. Presumably involved in the processing and regular turnover of intracellular proteins. Catalyzes the removal of unsubstituted N-terminal amino acids from various peptides. This Haemophilus influenzae (strain ATCC 51907 / DSM 11121 / KW20 / Rd) protein is Cytosol aminopeptidase (pepA).